Reading from the N-terminus, the 247-residue chain is Large ribosomal subunit protein uL30 (247 aa).

At methionine 1 the chain carries N-acetylmethionine. Tandem repeats lie at residues 7–17 (KKKVPAVPETL), 18–29 (KKKRRNFAELKI), 30–41 (KRLRKKFAQKML), and 42–53 (RKARRKLIYEKA). Residues 7-53 (KKKVPAVPETLKKKRRNFAELKIKRLRKKFAQKMLRKARRKLIYEKA) are 4 X 12 AA tandem repeats. Threonine 16 carries the post-translational modification Phosphothreonine. An N6-acetyllysine modification is found at lysine 123. Residue lysine 126 is modified to N6-succinyllysine. Tyrosine 138 carries the post-translational modification Phosphotyrosine.

The protein belongs to the universal ribosomal protein uL30 family. In terms of assembly, component of the large ribosomal subunit. Homodimer. Interacts with DHX33.

Its subcellular location is the cytoplasm. Its function is as follows. Component of the large ribosomal subunit. The ribosome is a large ribonucleoprotein complex responsible for the synthesis of proteins in the cell. Binds to G-rich structures in 28S rRNA and in mRNAs. Plays a regulatory role in the translation apparatus; inhibits cell-free translation of mRNAs. The protein is Large ribosomal subunit protein uL30 (RPL7) of Macaca fascicularis (Crab-eating macaque).